The following is a 500-amino-acid chain: Cytochrome P450 71B37 (500 aa).

The chain crosses the membrane as a helical span at residues 2–22 (ATIWFLPLLFLSCLLLAALRL). C440 is a heme binding site.

It belongs to the cytochrome P450 family. Requires heme as cofactor.

It is found in the membrane. This is Cytochrome P450 71B37 (CYP71B37) from Arabidopsis thaliana (Mouse-ear cress).